The chain runs to 105 residues: ATP-dependent Clp protease adapter protein ClpS (105 aa).

This sequence belongs to the ClpS family. In terms of assembly, binds to the N-terminal domain of the chaperone ClpA.

Involved in the modulation of the specificity of the ClpAP-mediated ATP-dependent protein degradation. This Klebsiella pneumoniae (strain 342) protein is ATP-dependent Clp protease adapter protein ClpS.